The following is a 99-amino-acid chain: Ubiquitin-related modifier 1 (99 aa).

G99 is subject to 1-thioglycine. G99 participates in a covalent cross-link: Glycyl lysine isopeptide (Gly-Lys) (interchain with K-? in acceptor proteins).

Belongs to the URM1 family. C-terminal thiocarboxylation occurs in 2 steps, it is first acyl-adenylated (-COAMP) via the hesA/moeB/thiF part of UBA4, then thiocarboxylated (-COSH) via the rhodanese domain of UBA4.

It localises to the cytoplasm. The protein operates within tRNA modification; 5-methoxycarbonylmethyl-2-thiouridine-tRNA biosynthesis. In terms of biological role, acts as a sulfur carrier required for 2-thiolation of mcm(5)S(2)U at tRNA wobble positions of cytosolic tRNA(Lys), tRNA(Glu) and tRNA(Gln). Serves as sulfur donor in tRNA 2-thiolation reaction by being thiocarboxylated (-COSH) at its C-terminus by the MOCS3 homolog UBA4. The sulfur is then transferred to tRNA to form 2-thiolation of mcm(5)S(2)U. Prior mcm(5) tRNA modification by the elongator complex is required for 2-thiolation. Also acts as a ubiquitin-like protein (UBL) that is covalently conjugated via an isopeptide bond to lysine residues of target proteins such as AHP1. The thiocarboxylated form serves as substrate for conjugation and oxidative stress specifically induces the formation of UBL-protein conjugates. The sequence is that of Ubiquitin-related modifier 1 from Yarrowia lipolytica (strain CLIB 122 / E 150) (Yeast).